The sequence spans 209 residues: Peptidyl-tRNA hydrolase (209 aa).

Residue Tyr14 coordinates tRNA. Residue His19 is the Proton acceptor of the active site. Residues Tyr68, Asn70, and Asn116 each contribute to the tRNA site.

This sequence belongs to the PTH family. As to quaternary structure, monomer.

It localises to the cytoplasm. The catalysed reaction is an N-acyl-L-alpha-aminoacyl-tRNA + H2O = an N-acyl-L-amino acid + a tRNA + H(+). Its function is as follows. Hydrolyzes ribosome-free peptidyl-tRNAs (with 1 or more amino acids incorporated), which drop off the ribosome during protein synthesis, or as a result of ribosome stalling. Functionally, catalyzes the release of premature peptidyl moieties from peptidyl-tRNA molecules trapped in stalled 50S ribosomal subunits, and thus maintains levels of free tRNAs and 50S ribosomes. This Phenylobacterium zucineum (strain HLK1) protein is Peptidyl-tRNA hydrolase.